Consider the following 152-residue polypeptide: UPF0266 membrane protein YobD (152 aa).

The next 3 membrane-spanning stretches (helical) occupy residues 6 to 26, 45 to 65, and 67 to 87; these read LVLI…QFIM, VDSV…VTSH, and AQMT…IFWI.

It belongs to the UPF0266 family.

It is found in the cell inner membrane. The protein is UPF0266 membrane protein YobD of Salmonella paratyphi A (strain ATCC 9150 / SARB42).